The chain runs to 382 residues: Glycerate kinase (382 aa).

This sequence belongs to the glycerate kinase type-1 family.

It catalyses the reaction (R)-glycerate + ATP = (2R)-3-phosphoglycerate + ADP + H(+). The polypeptide is Glycerate kinase (glxK) (Bacillus subtilis (strain 168)).